A 295-amino-acid polypeptide reads, in one-letter code: MPWIQLRLHSSSEHADAISDLLMDEGSVSITFEDGKDQPIFEPKLGETPLWNDTVVVALFDADFDLAPVVDMLKSLPFLGSELKYKIEQIEDKDWVREWMDSYHPIQFGKRLWICPSWREVPDPEAVNVILDPGLAFGTGTHPTTALCLEWLDSLDLAGKDIIDFGCGSGILAVAALKLGAAKATGIDIDYQAIDASRDNAQRNQVEDRLALYLPEDQPAGLKAEVLVANILAGPLRELAPLIQALVQPGGKLALSGLLKEQAAEISECYAQWFDMDQPAHKDDWSRLTGVRKSL.

4 residues coordinate S-adenosyl-L-methionine: threonine 145, glycine 166, aspartate 188, and asparagine 230.

Belongs to the methyltransferase superfamily. PrmA family.

The protein resides in the cytoplasm. It carries out the reaction L-lysyl-[protein] + 3 S-adenosyl-L-methionine = N(6),N(6),N(6)-trimethyl-L-lysyl-[protein] + 3 S-adenosyl-L-homocysteine + 3 H(+). Methylates ribosomal protein L11. The chain is Ribosomal protein L11 methyltransferase from Shewanella amazonensis (strain ATCC BAA-1098 / SB2B).